The chain runs to 154 residues: Cytochrome c-type biogenesis protein CcmE (154 aa).

At 1 to 8 (MTPQRKRR) the chain is on the cytoplasmic side. The chain crosses the membrane as a helical; Signal-anchor for type II membrane protein span at residues 9–29 (LVMLAALAGGVGVAVALALAA). Over 30 to 154 (LQQNINLFYS…GGTPAAEPQP (125 aa)) the chain is Periplasmic. Residues His-124 and Tyr-128 each coordinate heme. The segment at 130-154 (PPEAAHALKQGAATSGGTPAAEPQP) is disordered.

This sequence belongs to the CcmE/CycJ family.

It localises to the cell inner membrane. In terms of biological role, heme chaperone required for the biogenesis of c-type cytochromes. Transiently binds heme delivered by CcmC and transfers the heme to apo-cytochromes in a process facilitated by CcmF and CcmH. In Bordetella petrii (strain ATCC BAA-461 / DSM 12804 / CCUG 43448), this protein is Cytochrome c-type biogenesis protein CcmE.